The chain runs to 355 residues: Acyl-CoA desaturase 1 (355 aa).

Topologically, residues 1–68 (MPAHMLQEIS…EGPPPKLEYV (68 aa)) are cytoplasmic. The segment covering 9–20 (ISSSYTTTTTIT) has biased composition (low complexity). The tract at residues 9 to 33 (ISSSYTTTTTITAPPSGNEREKVKT) is disordered. A helical transmembrane segment spans residues 69–89 (WRNIILMVLLHLGGLYGIILV). Substrate is bound at residue N71. The Lumenal portion of the chain corresponds to 90–93 (PSCK). The chain crosses the membrane as a helical span at residues 94–114 (LYTCLFGIFYYMTSALGITAG). Topologically, residues 115–213 (AHRLWSHRTY…EKLVMFQRRY (99 aa)) are cytoplasmic. H116 and H121 together coordinate Fe cation. A Histidine box-1 motif is present at residues 116–121 (HRLWSH). Positions 144, 151, and 152 each coordinate substrate. Fe cation contacts are provided by H153, H156, and H157. Positions 153–157 (HRAHH) match the Histidine box-2 motif. The substrate site is built by R184 and K185. The helical transmembrane segment at 214 to 233 (YKPGLLLMCFILPTLVPWYC) threads the bilayer. Residues 234 to 237 (WGET) are Lumenal-facing. A helical membrane pass occupies residues 238-259 (FVNSLFVSTFLRYTLVLNATWL). A substrate-binding site is contributed by W258. At 260–355 (VNSAAHLYGY…RTGDGSHKSS (96 aa)) the chain is on the cytoplasmic side. Residues H265, H294, H297, and H298 each coordinate Fe cation. A Histidine box-3 motif is present at residues 294–298 (HNYHH).

It belongs to the fatty acid desaturase type 1 family. Fe(2+) is required as a cofactor. Detected in liver (at protein level). Detected in skin and liver. Detected in sebaceous gland, but not in hair follicle. Detected in white and brown adipose tissue, eyelid, Harderian gland, and at lower levels in Meibomian gland, eyeball and adrenal gland. Highly expressed in liver, and detected at low levels in brain, heart, lung, stomach, skeletal muscle and kidney.

The protein localises to the endoplasmic reticulum membrane. Its subcellular location is the microsome membrane. It catalyses the reaction octadecanoyl-CoA + 2 Fe(II)-[cytochrome b5] + O2 + 2 H(+) = (9Z)-octadecenoyl-CoA + 2 Fe(III)-[cytochrome b5] + 2 H2O. In terms of biological role, stearoyl-CoA desaturase that utilizes O(2) and electrons from reduced cytochrome b5 to introduce the first double bond into saturated fatty acyl-CoA substrates. Catalyzes the insertion of a cis double bond at the Delta-9 position into fatty acyl-CoA substrates including palmitoyl-CoA and stearoyl-CoA. Gives rise to a mixture of 16:1 and 18:1 unsaturated fatty acids. Plays an important role in lipid biosynthesis. Plays an important role in regulating the expression of genes that are involved in lipogenesis and in regulating mitochondrial fatty acid oxidation. Plays an important role in body energy homeostasis. Contributes to the biosynthesis of membrane phospholipids, cholesterol esters and triglycerides. Required for normal development of sebaceous glands. Required for the biosynthesis of normal levels of Delta-9 unsaturated fatty acids and 1-alkyl-2,3-diacylglycerol in the Harderian gland. Required for normal production of meibum, an oily material that prevents drying of the cornea. The chain is Acyl-CoA desaturase 1 (Scd1) from Mus musculus (Mouse).